The sequence spans 353 residues: 3-dehydroquinate synthase (353 aa).

Residues 62 to 67 (DGEQYK), 96 to 100 (GVIGD), 120 to 121 (TT), K133, and K142 contribute to the NAD(+) site. Zn(2+) contacts are provided by E175, H236, and H253.

The protein belongs to the sugar phosphate cyclases superfamily. Dehydroquinate synthase family. It depends on NAD(+) as a cofactor. Co(2+) is required as a cofactor. The cofactor is Zn(2+).

The protein resides in the cytoplasm. The catalysed reaction is 7-phospho-2-dehydro-3-deoxy-D-arabino-heptonate = 3-dehydroquinate + phosphate. It participates in metabolic intermediate biosynthesis; chorismate biosynthesis; chorismate from D-erythrose 4-phosphate and phosphoenolpyruvate: step 2/7. In terms of biological role, catalyzes the conversion of 3-deoxy-D-arabino-heptulosonate 7-phosphate (DAHP) to dehydroquinate (DHQ). This Helicobacter hepaticus (strain ATCC 51449 / 3B1) protein is 3-dehydroquinate synthase.